Reading from the N-terminus, the 228-residue chain is MGPMRTIVYADGGCDPNPGPGGWAAVIQAPTGTIELYGGELATTNNRMELTAAIRALEHFPEGAAIEMRCDSQYVVKSVTEWMRGWKARGWRTATGPVKNIDLMQRLDALAAARDVRWTWVRGHAGEAGNERADRLATLGRREALSGKTSGEAMPLPADAAPALAPAQPVQSKTVQVALSADLANALSRAAGRAGITPQAYLEDAVRLALELKPPGVARVRAELQKAS.

An RNase H type-1 domain is found at 2–142 (GPMRTIVYAD…ADRLATLGRR (141 aa)). Mg(2+) is bound by residues Asp-11, Glu-49, Asp-71, and Asp-134.

Belongs to the RNase H family. As to quaternary structure, monomer. Mg(2+) serves as cofactor.

It localises to the cytoplasm. The catalysed reaction is Endonucleolytic cleavage to 5'-phosphomonoester.. Its function is as follows. Endonuclease that specifically degrades the RNA of RNA-DNA hybrids. In Methylorubrum extorquens (strain PA1) (Methylobacterium extorquens), this protein is Ribonuclease H.